The following is a 160-amino-acid chain: 2-C-methyl-D-erythritol 2,4-cyclodiphosphate synthase (160 aa).

Residues Asp-11 and His-13 each coordinate a divalent metal cation. Residues 11–13 (DVH) and 37–38 (HS) contribute to the 4-CDP-2-C-methyl-D-erythritol 2-phosphate site. His-45 provides a ligand contact to a divalent metal cation. Residues 59-61 (DIG) and Arg-145 contribute to the 4-CDP-2-C-methyl-D-erythritol 2-phosphate site.

The protein belongs to the IspF family. As to quaternary structure, homotrimer. The cofactor is a divalent metal cation.

The catalysed reaction is 4-CDP-2-C-methyl-D-erythritol 2-phosphate = 2-C-methyl-D-erythritol 2,4-cyclic diphosphate + CMP. It participates in isoprenoid biosynthesis; isopentenyl diphosphate biosynthesis via DXP pathway; isopentenyl diphosphate from 1-deoxy-D-xylulose 5-phosphate: step 4/6. Functionally, involved in the biosynthesis of isopentenyl diphosphate (IPP) and dimethylallyl diphosphate (DMAPP), two major building blocks of isoprenoid compounds. Catalyzes the conversion of 4-diphosphocytidyl-2-C-methyl-D-erythritol 2-phosphate (CDP-ME2P) to 2-C-methyl-D-erythritol 2,4-cyclodiphosphate (ME-CPP) with a corresponding release of cytidine 5-monophosphate (CMP). The chain is 2-C-methyl-D-erythritol 2,4-cyclodiphosphate synthase from Neisseria meningitidis serogroup A / serotype 4A (strain DSM 15465 / Z2491).